The primary structure comprises 278 residues: MADS-box transcription factor PHERES 2 (278 aa).

Positions 1–60 (MKRKMKLSLIENSVSRKTTFTKRKKGMTKKLTELVTLCGVEACAVVYSPFNSIPEAWPSR) constitute an MADS-box domain.

As to quaternary structure, interacts with AGL61/DIANA and AGL62. Male gametophyte, embryo and endosperm.

It localises to the nucleus. Functionally, probable transcription factor involved in the development of gametophytes and seeds. This Arabidopsis thaliana (Mouse-ear cress) protein is MADS-box transcription factor PHERES 2 (PHE2).